The chain runs to 682 residues: Polycomb protein suz12-B (682 aa).

The tract at residues Asp326–Thr355 is disordered. The span at Ser340–Ser354 shows a compositional bias: polar residues. The C2H2-type zinc finger occupies Leu408 to His431. Residues Arg523 to Phe599 form a VEFS-box region.

Belongs to the VEFS (VRN2-EMF2-FIS2-SU(Z)12) family. Component of the prc2/eed-ezh2 complex.

The protein resides in the nucleus. Its function is as follows. Polycomb group (PcG) protein. Component of the prc2/eed-ezh2 complex, which methylates 'Lys-9' and 'Lys-27' of histone H3, leading to transcriptional repression of the affected target gene. This is Polycomb protein suz12-B (suz12b) from Danio rerio (Zebrafish).